The sequence spans 290 residues: DegV domain-containing protein MG450 (290 aa).

The 287-residue stretch at 3 to 289 (IAFLVDSVSN…INSYAFLIQT (287 aa)) folds into the DegV domain. Hexadecanoate contacts are provided by threonine 65 and serine 97.

Functionally, may bind long-chain fatty acids, such as palmitate, and may play a role in lipid transport or fatty acid metabolism. This is DegV domain-containing protein MG450 from Mycoplasma genitalium (strain ATCC 33530 / DSM 19775 / NCTC 10195 / G37) (Mycoplasmoides genitalium).